Here is a 186-residue protein sequence, read N- to C-terminus: HTH-type transcriptional regulator Hpr (186 aa).

The 145-residue stretch at Ala13–Gly157 folds into the HTH marR-type domain. A DNA-binding region (H-T-H motif) is located at residues Ile63–Glu86.

In terms of assembly, homodimer.

In terms of biological role, negative regulator of protease production and sporulation. This chain is HTH-type transcriptional regulator Hpr, found in Lysinibacillus sphaericus (strain C3-41).